We begin with the raw amino-acid sequence, 405 residues long: MEKLMFHPHGKEFHHNPFSVLGRFREEEPIHRFELKRFGATYPAWLITRYDDCMAFLKDNRITRDVKNVMNQEQIKMLNVSEDIDFVSDHMLAKDTPDHTRLRSLVHQAFTPRTIENLRGSIEQIAEQLLDEMEKENKADIMKSFASPLPFIVISELMGIPKEDRSQFQIWTNAMVDTSEGNRELTNQALREFKDYIAKLIHDRRIKPKDDLISKLVHAEENGSKLSEKELYSMLFLLVVAGLETTVNLLGSGTLALLQHKKECEKLKQQPEMIATAVEELLRYTSPVVMMANRWAIEDFTYKGHSIKRGDMIFIGIGSANRDPNFFENPEILNINRSPNRHISFGFGIHFCLGAPLARLEGHIAFKALLKRFPDIELAVAPDDIQWRKNVFLRGLESLPVSLSK.

A helical membrane pass occupies residues 231-251; sequence LYSMLFLLVVAGLETTVNLLG. Residue cysteine 352 participates in heme binding.

This sequence belongs to the cytochrome P450 family.

Its subcellular location is the cell membrane. Its pathway is antibiotic biosynthesis; bacillaene biosynthesis. Its function is as follows. Involved in the metabolism of the antibiotic polyketide bacillaene which is involved in secondary metabolism. The substrate is dihydrobacillaene. The chain is Polyketide biosynthesis cytochrome P450 PksS (pksS) from Bacillus subtilis (strain 168).